The chain runs to 60 residues: Large ribosomal subunit protein bL32 (60 aa).

A disordered region spans residues 1–60; that stretch reads MAVQQVKKSRSKRDMRRSHDSLTNPTLSTDKSTGELHLRHHVSPNGFYKGRKVVDTKSED. Basic residues predominate over residues 7–16; it reads KKSRSKRDMR. The segment covering 22-31 has biased composition (polar residues); sequence LTNPTLSTDK.

This sequence belongs to the bacterial ribosomal protein bL32 family.

The chain is Large ribosomal subunit protein bL32 from Francisella tularensis subsp. holarctica (strain LVS).